The chain runs to 1725 residues: Latrophilin Cirl (1725 aa).

The Extracellular portion of the chain corresponds to 1 to 757; sequence MALNELGNCA…LFTMFDGNMR (757 aa). The 90-residue stretch at 18–107 folds into the SUEL-type lectin domain; that stretch reads ACEGKQLTIE…KYLEAHYQCI (90 aa). A glycan (N-linked (GlcNAc...) asparagine) is linked at Asn-135. Residues 164 to 284 form a disordered region; the sequence is AVQPTHSTPS…SAANNSVNIG (121 aa). Composition is skewed to low complexity over residues 167-176 and 224-236; these read PTHSTPSSST and SSSS…SAGN. N-linked (GlcNAc...) asparagine glycans are attached at residues Asn-236, Asn-278, Asn-326, Asn-388, Asn-645, Asn-693, and Asn-720. Positions 259–282 are enriched in polar residues; the sequence is LLTTKSSPNRTPGTTASAANNSVN. The segment at 361–390 is disordered; sequence DDEYDDDLPAASSTTPQPSNNGGDCVHNSS. The segment covering 371 to 390 has biased composition (polar residues); the sequence is ASSTTPQPSNNGGDCVHNSS. The region spanning 551-744 is the GAIN-B domain; that stretch reads RNVVQKVKNI…AILMDVVDEH (194 aa). 2 disulfide bridges follow: Cys-699–Cys-726 and Cys-714–Cys-728. The tract at residues 699–744 is GPS; the sequence is CVFWNYIDHAWSANGCSLESTNRTHSVCSCNHLTNFAILMDVVDEH. Residues 758–778 traverse the membrane as a helical segment; that stretch reads IFIYISVAICVVFIIIALLTL. The Cytoplasmic segment spans residues 779–791; the sequence is KLFNGVFVKSART. The chain crosses the membrane as a helical span at residues 792-812; sequence SIYSSIYICLLAIELLFLLGI. The Extracellular portion of the chain corresponds to 813–818; that stretch reads EQTETS. The helical transmembrane segment at 819–839 threads the bilayer; it reads IFCGFITVFLHCAILSGTAWF. The Cytoplasmic segment spans residues 840–865; it reads CYEAFHSYSTLTSDELLLEVDQTPKV. A helical transmembrane segment spans residues 866-886; that stretch reads NCYYLLSYGLSLSVVAISLVI. Residues 887–910 are Extracellular-facing; the sequence is DPSTYTQNDYCVLMEANALFYSTF. Residues 911-931 form a helical membrane-spanning segment; that stretch reads VAPVLIFFVAAITYTFLSWII. The Cytoplasmic portion of the chain corresponds to 932-958; it reads MRRKSRTALKTKEHTRLANVRFDIRCS. Residues 959-979 traverse the membrane as a helical segment; sequence FVFLLLLSVVWCCAYFYLRGA. Residues 980–986 lie on the Extracellular side of the membrane; that stretch reads KLDEDGA. Residues 987–1007 form a helical membrane-spanning segment; the sequence is PIYGYCFICFNTLLGIYIFVF. Residues 1008 to 1725 are Cytoplasmic-facing; sequence HCIQNEKIRR…VRCYLEPLAK (718 aa). Positions 1056–1088 are disordered; that stretch reads TANQSAGTLSKSKSKLPLGAGDEARDGDAQQQQ. Ser-1153 is modified (phosphoserine). Disordered regions lie at residues 1236 to 1263, 1309 to 1337, 1472 to 1555, and 1636 to 1705; these read HNNQ…LHSR, QQLQ…AEQH, GGGS…SDER, and LFGH…QARH. A compositionally biased stretch (basic residues) spans 1237-1246; sequence NNQHGKKKRG. Ser-1255 and Ser-1262 each carry phosphoserine. The span at 1309 to 1327 shows a compositional bias: low complexity; that stretch reads QQLQQQQLRQQRQQQQQQL. Residues Ser-1328 and Ser-1329 each carry the phosphoserine modification. Over residues 1478–1496 the composition is skewed to low complexity; the sequence is GGSVTSRSQQQQQQQLKQK. 2 stretches are compositionally biased toward acidic residues: residues 1505–1522 and 1532–1543; these read DDDD…DEVT and CDDEDNESDIDD. A compositionally biased stretch (polar residues) spans 1651-1666; the sequence is QTPAQKRQQLQKLSPQ. Low complexity predominate over residues 1667-1683; that stretch reads STTSSSSHTSHSNPQHA. The segment covering 1684-1693 has biased composition (basic residues); the sequence is PAHHLQHHHT. Positions 1694 to 1705 are enriched in low complexity; that stretch reads QQQQQQQQQARH.

The protein belongs to the G-protein coupled receptor 2 family. LN-TM7 subfamily. In terms of assembly, forms a heterodimer, consisting of a large extracellular region non-covalently linked to a seven-transmembrane moiety. Proteolytically cleaved into 2 subunits, an extracellular subunit and a seven-transmembrane subunit.

The protein localises to the cell membrane. The chain is Latrophilin Cirl from Drosophila mojavensis (Fruit fly).